A 419-amino-acid polypeptide reads, in one-letter code: Tyrosine--tRNA ligase (419 aa).

Y42 contacts L-tyrosine. The 'HIGH' region signature appears at 47–56; the sequence is ATAPSLHVGS. L-tyrosine contacts are provided by Y179 and Q183. The 'KMSKS' region motif lies at 239-243; it reads KMGKT. An ATP-binding site is contributed by K242. The 66-residue stretch at 353–418 folds into the S4 RNA-binding domain; sequence IVLANLFADA…GKKKIVLVKP (66 aa).

It belongs to the class-I aminoacyl-tRNA synthetase family. TyrS type 1 subfamily. In terms of assembly, homodimer.

The protein resides in the cytoplasm. The enzyme catalyses tRNA(Tyr) + L-tyrosine + ATP = L-tyrosyl-tRNA(Tyr) + AMP + diphosphate + H(+). Functionally, catalyzes the attachment of tyrosine to tRNA(Tyr) in a two-step reaction: tyrosine is first activated by ATP to form Tyr-AMP and then transferred to the acceptor end of tRNA(Tyr). The polypeptide is Tyrosine--tRNA ligase (Caulobacter sp. (strain K31)).